Reading from the N-terminus, the 236-residue chain is Small ribosomal subunit protein uS5 (236 aa).

An S5 DRBM domain is found at 61-124; that stretch reads ENQEVLDIAL…NYAKLNIIEI (64 aa).

This sequence belongs to the universal ribosomal protein uS5 family. As to quaternary structure, part of the 30S ribosomal subunit. Contacts protein S4.

With S4 and S12 plays an important role in translational accuracy. This chain is Small ribosomal subunit protein uS5, found in Pyrococcus furiosus (strain ATCC 43587 / DSM 3638 / JCM 8422 / Vc1).